The following is a 673-amino-acid chain: Annexin A6 (673 aa).

A2 is subject to N-acetylalanine. S13 carries the post-translational modification Phosphoserine. Annexin repeat units follow at residues 20–91 (FDAN…NLMR), 92–163 (PLAY…VLLQ), 175–247 (DLVQ…AVVK), 251–322 (STPE…KLCG), 363–434 (FNPD…GLMM), 435–506 (PPAH…SLAT), 521–595 (EDAQ…AIVQ), and 599–670 (NKPL…ALCG). Residue Y30 is modified to Phosphotyrosine. Residues K63, K68, K75, and K81 each carry the N6-acetyllysine modification. Y201 is subject to Phosphotyrosine. K306, K370, and K418 each carry N6-acetyllysine. S422 is subject to Phosphoserine. The residue at position 483 (K483) is an N6-acetyllysine. A Phosphoserine modification is found at S537. K620 carries the N6-acetyllysine modification.

This sequence belongs to the annexin family.

The protein resides in the cytoplasm. Its subcellular location is the melanosome. May associate with CD21. May regulate the release of Ca(2+) from intracellular stores. This is Annexin A6 (Anxa6) from Mus musculus (Mouse).